The sequence spans 289 residues: Putative 2-aminoethylphosphonate transport system permease protein PhnU (289 aa).

6 helical membrane passes run 19 to 39 (WLLL…SLIV), 76 to 96 (FFAT…LVFI), 111 to 131 (FIAL…GSAG), 150 to 170 (FLYS…PLVM), 202 to 222 (VIFP…LLLT), and 254 to 274 (YTVA…LFSL). Residues 68 to 275 (LLNTLQIAFF…VLSLGLFSLY (208 aa)) form the ABC transmembrane type-1 domain.

It belongs to the binding-protein-dependent transport system permease family.

It localises to the cell inner membrane. Probably part of the PhnSTUV complex (TC 3.A.1.11.5) involved in 2-aminoethylphosphonate import. Probably responsible for the translocation of the substrate across the membrane. The polypeptide is Putative 2-aminoethylphosphonate transport system permease protein PhnU (phnU) (Salmonella typhi).